A 49-amino-acid polypeptide reads, in one-letter code: Lectin alpha chain (49 aa).

Belongs to the leguminous lectin family. In terms of assembly, homotetramer. In terms of processing, the beta and gamma chains are produced by partial proteolytic processing of the lectin alpha chain by an asparaginyl endopeptidase. Mixture of 60% alpha lectin and 40% of its beta and gamma proteolytic fragments. In terms of tissue distribution, seed.

D-mannose/D-glucose-binding lectin. The polypeptide is Lectin alpha chain (Dioclea violacea).